The following is a 655-amino-acid chain: Ubiquilin-3 (655 aa).

The 77-residue stretch at 22–98 (IKVTVKTPKD…LVIKRQHRAM (77 aa)) folds into the Ubiquitin-like domain. Residues 102-124 (CPAASVPTQGPSPGSLPQPSSIY) form a disordered region. A compositionally biased stretch (low complexity) spans 110–122 (QGPSPGSLPQPSS). The region spanning 194–233 (NPHMQQLIQHNPEIGHILNNPEIMRQTLEFLRNPAMMQEM) is the STI1 domain. 3 disordered regions span residues 277–330 (PFAT…PDIR), 364–399 (ASAL…LPEE), and 412–447 (FLRY…LVSG). The segment covering 279–290 (ATATTDNATTTT) has biased composition (low complexity). A compositionally biased stretch (basic and acidic residues) spans 318–330 (GRQDGDQDAPDIR). The span at 377 to 395 (VNRVPPSSPSSQEPGSGQP) shows a compositional bias: low complexity. Positions 432-441 (KSSTGHSTNL) are enriched in polar residues. The UBA domain occupies 609 to 655 (QLQPEAHFQVQLEQLRSMGFLNREANLQALIATGGDVDAAVEKLRQS).

Testis specific.

The polypeptide is Ubiquilin-3 (UBQLN3) (Homo sapiens (Human)).